A 65-amino-acid chain; its full sequence is Large ribosomal subunit protein bL35 (65 aa).

The disordered stretch occupies residues 1–47 (MPKIKTNRGAAKRFRKTASGKIKRNSAFTSHILTSKTRKRKRQLRSS). Residues 10 to 24 (AAKRFRKTASGKIKR) show a composition bias toward basic residues. The span at 26-35 (SAFTSHILTS) shows a compositional bias: polar residues.

The protein belongs to the bacterial ribosomal protein bL35 family.

The sequence is that of Large ribosomal subunit protein bL35 from Geobacter metallireducens (strain ATCC 53774 / DSM 7210 / GS-15).